The chain runs to 157 residues: 2-C-methyl-D-erythritol 2,4-cyclodiphosphate synthase (157 aa).

D9 and H11 together coordinate a divalent metal cation. Residues 9–11 and 35–36 each bind 4-CDP-2-C-methyl-D-erythritol 2-phosphate; these read DVH and HS. Residue H43 coordinates a divalent metal cation. 4-CDP-2-C-methyl-D-erythritol 2-phosphate contacts are provided by residues 57–59, F140, and R143; that span reads DIG.

This sequence belongs to the IspF family. In terms of assembly, homotrimer. The cofactor is a divalent metal cation.

It carries out the reaction 4-CDP-2-C-methyl-D-erythritol 2-phosphate = 2-C-methyl-D-erythritol 2,4-cyclic diphosphate + CMP. It participates in isoprenoid biosynthesis; isopentenyl diphosphate biosynthesis via DXP pathway; isopentenyl diphosphate from 1-deoxy-D-xylulose 5-phosphate: step 4/6. In terms of biological role, involved in the biosynthesis of isopentenyl diphosphate (IPP) and dimethylallyl diphosphate (DMAPP), two major building blocks of isoprenoid compounds. Catalyzes the conversion of 4-diphosphocytidyl-2-C-methyl-D-erythritol 2-phosphate (CDP-ME2P) to 2-C-methyl-D-erythritol 2,4-cyclodiphosphate (ME-CPP) with a corresponding release of cytidine 5-monophosphate (CMP). The chain is 2-C-methyl-D-erythritol 2,4-cyclodiphosphate synthase from Caldicellulosiruptor bescii (strain ATCC BAA-1888 / DSM 6725 / KCTC 15123 / Z-1320) (Anaerocellum thermophilum).